A 434-amino-acid polypeptide reads, in one-letter code: Potassium/proton antiporter CemA (434 aa).

A run of 5 helical transmembrane segments spans residues 75–95 (LLEYKLSLWLIQLFLIFSLFF), 210–230 (LASLQYIGCLFFIPLGVSFFF), 311–331 (IVLHLLTDLIWFITLSCLFIL), 359–379 (ILLLTDLCIGFHSPHGWEIVI), and 395–415 (ISCFVSTFPVILDTVFKYLIF).

This sequence belongs to the CemA family.

The protein localises to the plastid. It localises to the chloroplast inner membrane. The catalysed reaction is K(+)(in) + H(+)(out) = K(+)(out) + H(+)(in). Its function is as follows. Contributes to K(+)/H(+) antiport activity by supporting proton efflux to control proton extrusion and homeostasis in chloroplasts in a light-dependent manner to modulate photosynthesis. Prevents excessive induction of non-photochemical quenching (NPQ) under continuous-light conditions. Indirectly promotes efficient inorganic carbon uptake into chloroplasts. The protein is Potassium/proton antiporter CemA of Marchantia polymorpha (Common liverwort).